Reading from the N-terminus, the 258-residue chain is Ribosome maturation factor RimP (258 aa).

Disordered regions lie at residues 48–88 (PQRP…PTSA) and 212–258 (IFKK…AEND). Basic residues predominate over residues 215–224 (KPQKPGKKPG).

The protein belongs to the RimP family.

It is found in the cytoplasm. Its function is as follows. Required for maturation of 30S ribosomal subunits. This Desulfovibrio desulfuricans (strain ATCC 27774 / DSM 6949 / MB) protein is Ribosome maturation factor RimP.